The chain runs to 566 residues: Transcription factor opdL (566 aa).

The zn(2)-C6 fungal-type DNA-binding region spans 15 to 45; that stretch reads CATCARAKCRCVPRNGGRGRCERCHHLNKEC.

It is found in the nucleus. Functionally, transcription factor; part of the gene cluster that mediates the biosynthesis of oxopyrrolidines, polyketide-amino acid hybrid compounds with feature structures of tetramic acid. The chain is Transcription factor opdL from Penicillium oxalicum (strain 114-2 / CGMCC 5302) (Penicillium decumbens).